Reading from the N-terminus, the 195-residue chain is MSIVPIVIEQTGRTERVYDIYSRLLKDRIIFIGTEINDHVANVVIAQLLFLQTEDPEKDIHIYINSPGGMVSSGLAIYDTMQYVKPDIATYCIGQASSMACVLLAAGTKGKRFALPHSRVMIHQPIGGFYGQATDVEIHAKEILKMKDLLNNILAKHTGQPIEKIQKDTERDFFMSAEEAKLYGIVDEVISSIKK.

The Nucleophile role is filled by Ser98. His123 is an active-site residue.

This sequence belongs to the peptidase S14 family. As to quaternary structure, fourteen ClpP subunits assemble into 2 heptameric rings which stack back to back to give a disk-like structure with a central cavity, resembling the structure of eukaryotic proteasomes.

It localises to the cytoplasm. It carries out the reaction Hydrolysis of proteins to small peptides in the presence of ATP and magnesium. alpha-casein is the usual test substrate. In the absence of ATP, only oligopeptides shorter than five residues are hydrolyzed (such as succinyl-Leu-Tyr-|-NHMec, and Leu-Tyr-Leu-|-Tyr-Trp, in which cleavage of the -Tyr-|-Leu- and -Tyr-|-Trp bonds also occurs).. Its function is as follows. Cleaves peptides in various proteins in a process that requires ATP hydrolysis. Has a chymotrypsin-like activity. Plays a major role in the degradation of misfolded proteins. The sequence is that of ATP-dependent Clp protease proteolytic subunit from Thermodesulfovibrio yellowstonii (strain ATCC 51303 / DSM 11347 / YP87).